The following is a 354-amino-acid chain: MKKIIMTGGGTAGHVTPNLALVPELKKLGYEIKYIGSIEGIERKIIEREGIEYFPISSGKLRRYFDLKNFSDPFKVLKGVFQAKKIIKREKPDIVFSKGGFVTVPVVIAAHLNKIPVIAHESDITPGLANKLATPYCTRVCVTFPESVKHIKGDKAVLTGTPIRRELLEGNKLEGIKLCGFKDNKPILLIIGGSLGSKVINEIVRKNLDNILSKFNIIHICGKSNLDENLENRKGYVQFEYVNEELPDLMKASDLVISRAGANVIYELLALKKPNLLIPLSKKSSRGDQILNAASFEKSGYSLVLKEEELEDKTLMKKLNYLYENRNVYINNMSKSKMDNGVKNITELIKKYTK.

UDP-N-acetyl-alpha-D-glucosamine-binding positions include 11–13, arginine 164, serine 194, and glutamine 289; that span reads TAG.

The protein belongs to the glycosyltransferase 28 family. MurG subfamily.

It localises to the cell membrane. It carries out the reaction di-trans,octa-cis-undecaprenyl diphospho-N-acetyl-alpha-D-muramoyl-L-alanyl-D-glutamyl-meso-2,6-diaminopimeloyl-D-alanyl-D-alanine + UDP-N-acetyl-alpha-D-glucosamine = di-trans,octa-cis-undecaprenyl diphospho-[N-acetyl-alpha-D-glucosaminyl-(1-&gt;4)]-N-acetyl-alpha-D-muramoyl-L-alanyl-D-glutamyl-meso-2,6-diaminopimeloyl-D-alanyl-D-alanine + UDP + H(+). It participates in cell wall biogenesis; peptidoglycan biosynthesis. In terms of biological role, cell wall formation. Catalyzes the transfer of a GlcNAc subunit on undecaprenyl-pyrophosphoryl-MurNAc-pentapeptide (lipid intermediate I) to form undecaprenyl-pyrophosphoryl-MurNAc-(pentapeptide)GlcNAc (lipid intermediate II). The polypeptide is UDP-N-acetylglucosamine--N-acetylmuramyl-(pentapeptide) pyrophosphoryl-undecaprenol N-acetylglucosamine transferase (Clostridium botulinum (strain Loch Maree / Type A3)).